The sequence spans 125 residues: MPPPDPAAMGTWKFFRASVDGRPVFKKEFDKLPDQARAALIVLMQRYLVGDLAAGSIKPIRGDILELRWHEANNHFRVLFFRWGQHPVALTAFYKNQQKTPKTKIETALDRQKIWKRAFGDTPPI.

Belongs to the mycobacterial HigB family.

Its function is as follows. Toxic component of an atypical, type II toxin-antitoxin chaperone (TAC) system. Probably an endoribonuclease, neutralized by its cognate antitoxin HigA which also requires SecB-like chaperone MT2006 (AC Q7D7P7). This chain is Probable endoribonuclease HigB1, found in Mycobacterium tuberculosis (strain CDC 1551 / Oshkosh).